We begin with the raw amino-acid sequence, 325 residues long: Tetraacyldisaccharide 4'-kinase (325 aa).

Residue 55–62 (TAGGNGKT) participates in ATP binding.

Belongs to the LpxK family.

The enzyme catalyses a lipid A disaccharide + ATP = a lipid IVA + ADP + H(+). Its pathway is glycolipid biosynthesis; lipid IV(A) biosynthesis; lipid IV(A) from (3R)-3-hydroxytetradecanoyl-[acyl-carrier-protein] and UDP-N-acetyl-alpha-D-glucosamine: step 6/6. Transfers the gamma-phosphate of ATP to the 4'-position of a tetraacyldisaccharide 1-phosphate intermediate (termed DS-1-P) to form tetraacyldisaccharide 1,4'-bis-phosphate (lipid IVA). This chain is Tetraacyldisaccharide 4'-kinase, found in Cronobacter sakazakii (strain ATCC BAA-894) (Enterobacter sakazakii).